The sequence spans 386 residues: Methylthioribose-1-phosphate isomerase (386 aa).

The active-site Proton donor is the aspartate 261.

The protein belongs to the eIF-2B alpha/beta/delta subunits family. MtnA subfamily.

The protein localises to the cytoplasm. It localises to the nucleus. It carries out the reaction 5-(methylsulfanyl)-alpha-D-ribose 1-phosphate = 5-(methylsulfanyl)-D-ribulose 1-phosphate. Its pathway is amino-acid biosynthesis; L-methionine biosynthesis via salvage pathway; L-methionine from S-methyl-5-thio-alpha-D-ribose 1-phosphate: step 1/6. Its function is as follows. Catalyzes the interconversion of methylthioribose-1-phosphate (MTR-1-P) into methylthioribulose-1-phosphate (MTRu-1-P). The sequence is that of Methylthioribose-1-phosphate isomerase from Paracoccidioides brasiliensis (strain Pb03).